The chain runs to 286 residues: Toxin zeta (286 aa).

Position 39-46 (39-46 (GQPGSGKT)) interacts with ATP. The disordered stretch occupies residues 249–286 (MVQNQHQETPEFKAIQQKMESLQPPTPPIPKTPKLPGI). Residues 272-286 (PPTPPIPKTPKLPGI) are compositionally biased toward pro residues.

This sequence belongs to the zeta toxin family. As to quaternary structure, in the presence of the epsilon antitoxin, forms an inactive PezA(2)PezT(2) heterotetramer.

It catalyses the reaction UDP-N-acetyl-alpha-D-glucosamine + ATP = UDP-N-acetyl-alpha-D-glucosamine 3'-phosphate + ADP + H(+). In terms of biological role, toxic component of a type II toxin-antitoxin (TA) system. Phosphorylates UDP-N-acetyl-D-glucosamine (UNAG) on the 3'-hydroxyl group of the N-acetyl-D-glucosamine moiety, yielding UNAG-3P. UNAG-3P inhibits MurA, the first committed step in cell wall synthesis, which is then blocked. Phosphorylation is inhibited by cognate epsilon antitoxin. Part of a postsegregational killing (PSK) system involved in the killing of plasmid-free cells. The zeta toxin induces programmed cell death. The chain is Toxin zeta from Enterococcus hirae.